We begin with the raw amino-acid sequence, 211 residues long: Small ribosomal subunit protein uS4 (211 aa).

A disordered region spans residues 27–48 (GRKVLERRGSQPPGQHGASVRR). The S4 RNA-binding domain maps to 99 to 162 (RRLDNVVFRL…RKRDYFKDLE (64 aa)).

Belongs to the universal ribosomal protein uS4 family. As to quaternary structure, part of the 30S ribosomal subunit. Contacts protein S5. The interaction surface between S4 and S5 is involved in control of translational fidelity.

Its function is as follows. One of the primary rRNA binding proteins, it binds directly to 16S rRNA where it nucleates assembly of the body of the 30S subunit. With S5 and S12 plays an important role in translational accuracy. The polypeptide is Small ribosomal subunit protein uS4 (Herpetosiphon aurantiacus (strain ATCC 23779 / DSM 785 / 114-95)).